The primary structure comprises 359 residues: UPF0283 membrane protein RHE_CH02332 (359 aa).

Residues 1–61 form a disordered region; the sequence is MSKPPSDLPR…EDPFINPDRD (61 aa). Helical transmembrane passes span 77 to 97 and 111 to 131; these read FGKI…GLWT and LGYA…ALVI.

Belongs to the UPF0283 family.

Its subcellular location is the cell inner membrane. The chain is UPF0283 membrane protein RHE_CH02332 from Rhizobium etli (strain ATCC 51251 / DSM 11541 / JCM 21823 / NBRC 15573 / CFN 42).